We begin with the raw amino-acid sequence, 356 residues long: uncharacterized protein (356 aa).

Helical transmembrane passes span 2 to 22, 35 to 55, 76 to 96, 99 to 119, 124 to 144, and 152 to 172; these read IESI…FHRL, GYVT…PIPF, NMGY…FAFG, LLYG…GPFL, IVAL…LSIF, and EIAF…ITFV. One can recognise a GGDEF domain in the interval 218-353; sequence ESLALLLIDI…GRNQVMFNPI (136 aa).

The protein localises to the cell membrane. This is an uncharacterized protein from Staphylococcus haemolyticus (strain JCSC1435).